The sequence spans 427 residues: Serine--tRNA ligase (427 aa).

231-233 (TAE) lines the L-serine pocket. Position 262–264 (262–264 (RSE)) interacts with ATP. Position 285 (E285) interacts with L-serine. 349–352 (EISS) is a binding site for ATP. S385 lines the L-serine pocket.

Belongs to the class-II aminoacyl-tRNA synthetase family. Type-1 seryl-tRNA synthetase subfamily. In terms of assembly, homodimer. The tRNA molecule binds across the dimer.

It is found in the cytoplasm. It carries out the reaction tRNA(Ser) + L-serine + ATP = L-seryl-tRNA(Ser) + AMP + diphosphate + H(+). It catalyses the reaction tRNA(Sec) + L-serine + ATP = L-seryl-tRNA(Sec) + AMP + diphosphate + H(+). It functions in the pathway aminoacyl-tRNA biosynthesis; selenocysteinyl-tRNA(Sec) biosynthesis; L-seryl-tRNA(Sec) from L-serine and tRNA(Sec): step 1/1. Functionally, catalyzes the attachment of serine to tRNA(Ser). Is also able to aminoacylate tRNA(Sec) with serine, to form the misacylated tRNA L-seryl-tRNA(Sec), which will be further converted into selenocysteinyl-tRNA(Sec). The chain is Serine--tRNA ligase from Rhizobium etli (strain CIAT 652).